The sequence spans 841 residues: Outer membrane usher protein MyfC (841 aa).

The N-terminal stretch at 1-26 (MFFSLKNSVAKLIAFWAICLVLPVWA) is a signal peptide. An intrachain disulfide couples C817 to C840.

Belongs to the fimbrial export usher family.

It localises to the cell outer membrane. Its function is as follows. Involved in the export and assembly of the MyfA fimbrial subunit. The polypeptide is Outer membrane usher protein MyfC (myfC) (Yersinia enterocolitica).